Here is a 349-residue protein sequence, read N- to C-terminus: Holliday junction branch migration complex subunit RuvB (349 aa).

The large ATPase domain (RuvB-L) stretch occupies residues 1-181 (MDDRILTSVN…FGVLCPMEFY (181 aa)). Residues Leu-20, Arg-21, Gly-62, Lys-65, Thr-66, Thr-67, 128–130 (EDY), Arg-171, Tyr-181, and Arg-218 contribute to the ATP site. A Mg(2+)-binding site is contributed by Thr-66. Residues 182-252 (NDEELKEIIV…SAKKALNLLE (71 aa)) form a small ATPAse domain (RuvB-S) region. The head domain (RuvB-H) stretch occupies residues 255-349 (DEGFDSIDNK…DQCSFFKKEK (95 aa)). 2 residues coordinate DNA: Arg-310 and Arg-315.

Belongs to the RuvB family. Homohexamer. Forms an RuvA(8)-RuvB(12)-Holliday junction (HJ) complex. HJ DNA is sandwiched between 2 RuvA tetramers; dsDNA enters through RuvA and exits via RuvB. An RuvB hexamer assembles on each DNA strand where it exits the tetramer. Each RuvB hexamer is contacted by two RuvA subunits (via domain III) on 2 adjacent RuvB subunits; this complex drives branch migration. In the full resolvosome a probable DNA-RuvA(4)-RuvB(12)-RuvC(2) complex forms which resolves the HJ.

It localises to the cytoplasm. It carries out the reaction ATP + H2O = ADP + phosphate + H(+). Functionally, the RuvA-RuvB-RuvC complex processes Holliday junction (HJ) DNA during genetic recombination and DNA repair, while the RuvA-RuvB complex plays an important role in the rescue of blocked DNA replication forks via replication fork reversal (RFR). RuvA specifically binds to HJ cruciform DNA, conferring on it an open structure. The RuvB hexamer acts as an ATP-dependent pump, pulling dsDNA into and through the RuvAB complex. RuvB forms 2 homohexamers on either side of HJ DNA bound by 1 or 2 RuvA tetramers; 4 subunits per hexamer contact DNA at a time. Coordinated motions by a converter formed by DNA-disengaged RuvB subunits stimulates ATP hydrolysis and nucleotide exchange. Immobilization of the converter enables RuvB to convert the ATP-contained energy into a lever motion, pulling 2 nucleotides of DNA out of the RuvA tetramer per ATP hydrolyzed, thus driving DNA branch migration. The RuvB motors rotate together with the DNA substrate, which together with the progressing nucleotide cycle form the mechanistic basis for DNA recombination by continuous HJ branch migration. Branch migration allows RuvC to scan DNA until it finds its consensus sequence, where it cleaves and resolves cruciform DNA. The polypeptide is Holliday junction branch migration complex subunit RuvB (Clostridium acetobutylicum (strain ATCC 824 / DSM 792 / JCM 1419 / IAM 19013 / LMG 5710 / NBRC 13948 / NRRL B-527 / VKM B-1787 / 2291 / W)).